Reading from the N-terminus, the 418-residue chain is Ankyrin repeat domain-containing protein 61 (418 aa).

ANK repeat units follow at residues 27-57 (ALHS…NQPI), 75-104 (ESII…DPEV), 132-161 (NRTH…QVNT), 167-196 (NKRS…DVNA), 200-229 (ASMT…NVNC), 234-273 (TGNT…KVNA), 277-306 (KGQT…NVNI), and 310-343 (NGES…PLRM).

This is Ankyrin repeat domain-containing protein 61 (ANKRD61) from Homo sapiens (Human).